The chain runs to 263 residues: Dihydropteroate synthase type-3 (263 aa).

Positions 2–257 (SKIFGIVNIT…DVKSLSDALK (256 aa)) constitute a Pterin-binding domain. Asn-9 provides a ligand contact to Mg(2+). Ser-49 serves as a coordination point for 4-aminobenzoate. Residues Asp-82, Asn-101, and Asp-172 each coordinate (7,8-dihydropterin-6-yl)methyl diphosphate. The 6-hydroxymethyl-7,8-dihydropterin site is built by Asn-101 and Asp-172. Position 177 (Phe-177) interacts with 4-aminobenzoate. Lys-211 is a (7,8-dihydropterin-6-yl)methyl diphosphate binding site. 6-hydroxymethyl-7,8-dihydropterin is bound at residue Lys-211. Ser-212 provides a ligand contact to 4-aminobenzoate. 245–247 (RTH) contributes to the (7,8-dihydropterin-6-yl)methyl diphosphate binding site.

Belongs to the DHPS family. Mg(2+) is required as a cofactor.

The enzyme catalyses (7,8-dihydropterin-6-yl)methyl diphosphate + 4-aminobenzoate = 7,8-dihydropteroate + diphosphate. Its pathway is cofactor biosynthesis; tetrahydrofolate biosynthesis; 7,8-dihydrofolate from 2-amino-4-hydroxy-6-hydroxymethyl-7,8-dihydropteridine diphosphate and 4-aminobenzoate: step 1/2. In terms of biological role, catalyzes the condensation of para-aminobenzoate (pABA) with 6-hydroxymethyl-7,8-dihydropterin diphosphate (DHPt-PP) to form 7,8-dihydropteroate (H2Pte), the immediate precursor of folate derivatives. Confers resistance to sulfonamide antibiotics, including sulfamethoxazole (SMX), sulfadiazine and sulfisoxazole. This Escherichia coli protein is Dihydropteroate synthase type-3.